Reading from the N-terminus, the 224-residue chain is Ribosomal RNA large subunit methyltransferase E (224 aa).

Residues G60, W62, D93, D109, and D137 each coordinate S-adenosyl-L-methionine. Residue K177 is the Proton acceptor of the active site.

It belongs to the class I-like SAM-binding methyltransferase superfamily. RNA methyltransferase RlmE family.

Its subcellular location is the cytoplasm. It carries out the reaction uridine(2552) in 23S rRNA + S-adenosyl-L-methionine = 2'-O-methyluridine(2552) in 23S rRNA + S-adenosyl-L-homocysteine + H(+). Specifically methylates the uridine in position 2552 of 23S rRNA at the 2'-O position of the ribose in the fully assembled 50S ribosomal subunit. The chain is Ribosomal RNA large subunit methyltransferase E from Polynucleobacter asymbioticus (strain DSM 18221 / CIP 109841 / QLW-P1DMWA-1) (Polynucleobacter necessarius subsp. asymbioticus).